Here is a 327-residue protein sequence, read N- to C-terminus: Serpentine receptor class alpha-33 (327 aa).

Transmembrane regions (helical) follow at residues 20 to 40 (FSVYFIDTSCIISMAVTVLAI), 56 to 76 (LLITDLVFINIHNLSYIFLQN), 133 to 153 (FSHANYGFLLAILSLIASTVF), 186 to 206 (IIPYLAICLTSIVCSLLLIIY), 227 to 247 (AVVSSISVAILGIIQLVLFCF), and 270 to 290 (IIGWFYTSPLNAIISPTAVFL).

Belongs to the nematode receptor-like protein sra family.

It localises to the membrane. The polypeptide is Serpentine receptor class alpha-33 (sra-33) (Caenorhabditis elegans).